The chain runs to 328 residues: DNA-directed RNA polymerase subunit alpha 2 (328 aa).

The segment at 1–234 (MQGSVIEFLK…EQLDAFVDLR (234 aa)) is alpha N-terminal domain (alpha-NTD). Residues 248-328 (FDPILLRPVD…NWPPASLSED (81 aa)) are alpha C-terminal domain (alpha-CTD).

Belongs to the RNA polymerase alpha chain family. In terms of assembly, homodimer. The RNAP catalytic core consists of 2 alpha, 1 beta, 1 beta' and 1 omega subunit. When a sigma factor is associated with the core the holoenzyme is formed, which can initiate transcription.

It catalyses the reaction RNA(n) + a ribonucleoside 5'-triphosphate = RNA(n+1) + diphosphate. Functionally, DNA-dependent RNA polymerase catalyzes the transcription of DNA into RNA using the four ribonucleoside triphosphates as substrates. The protein is DNA-directed RNA polymerase subunit alpha 2 of Psychromonas ingrahamii (strain DSM 17664 / CCUG 51855 / 37).